Reading from the N-terminus, the 230-residue chain is Uracil-DNA glycosylase (230 aa).

Asp65 (proton acceptor) is an active-site residue.

The protein belongs to the uracil-DNA glycosylase (UDG) superfamily. UNG family.

Its subcellular location is the cytoplasm. It catalyses the reaction Hydrolyzes single-stranded DNA or mismatched double-stranded DNA and polynucleotides, releasing free uracil.. In terms of biological role, excises uracil residues from the DNA which can arise as a result of misincorporation of dUMP residues by DNA polymerase or due to deamination of cytosine. In Lactiplantibacillus plantarum (strain ATCC BAA-793 / NCIMB 8826 / WCFS1) (Lactobacillus plantarum), this protein is Uracil-DNA glycosylase.